The sequence spans 634 residues: Chaperone protein DnaK 2 (634 aa).

Residue threonine 197 is modified to Phosphothreonine; by autocatalysis. Low complexity predominate over residues 600 to 620; sequence ASAEASANAQAGPSSSSSSSS. The interval 600 to 634 is disordered; it reads ASAEASANAQAGPSSSSSSSSGDDDVIDAEFSESK. Residues 621-634 are compositionally biased toward acidic residues; it reads GDDDVIDAEFSESK.

This sequence belongs to the heat shock protein 70 family.

Functionally, acts as a chaperone. The sequence is that of Chaperone protein DnaK 2 from Synechococcus sp. (strain ATCC 27144 / PCC 6301 / SAUG 1402/1) (Anacystis nidulans).